Here is a 66-residue protein sequence, read N- to C-terminus: Beta-toxin Chui3 (66 aa).

The LCN-type CS-alpha/beta domain occupies 1–66 (KEGYLVELGT…VWPLKNKTCR (66 aa)). 4 disulfides stabilise this stretch: Cys-12-Cys-65, Cys-16-Cys-41, Cys-25-Cys-46, and Cys-29-Cys-48.

Belongs to the long (4 C-C) scorpion toxin superfamily. Sodium channel inhibitor family. Beta subfamily. In terms of tissue distribution, expressed by the venom gland.

It is found in the secreted. Functionally, beta toxins bind voltage-independently at site-4 of sodium channels (Nav) and shift the voltage of activation toward more negative potentials thereby affecting sodium channel activation and promoting spontaneous and repetitive firing. Acts on human sodium channel Nav1.6/SCN8A. The sequence is that of Beta-toxin Chui3 from Centruroides huichol (Scorpion).